Consider the following 141-residue polypeptide: Eukaryotic translation initiation factor 1A (141 aa).

Over residues 1-15 (MPKNKGKGGKNRRRG) the composition is skewed to basic residues. Positions 1 to 28 (MPKNKGKGGKNRRRGKNENEQKRELQFK) are disordered. Positions 16–28 (KNENEQKRELQFK) are enriched in basic and acidic residues. In terms of domain architecture, S1-like spans 21–95 (QKRELQFKEE…DKADVILRYN (75 aa)).

It belongs to the eIF-1A family.

Functionally, seems to be required for maximal rate of protein biosynthesis. Enhances ribosome dissociation into subunits and stabilizes the binding of the initiator Met-tRNA(I) to 40 S ribosomal subunits. In Dictyostelium discoideum (Social amoeba), this protein is Eukaryotic translation initiation factor 1A (eif1a).